A 259-amino-acid polypeptide reads, in one-letter code: Insulin-induced gene 1 protein (259 aa).

Over 1 to 66 (MPRLHDHVWN…ARPGSWHHDL (66 aa)) the chain is Cytoplasmic. The tract at residues 36 to 55 (PGVPEPEHAPRGQRAGTTGC) is disordered. The chain crosses the membrane as a helical span at residues 67-89 (VQRSLVLFSFGVVLALVLNLLQI). Residues 90 to 108 (QRNVTLFPDEVIATIFSSA) lie on the Extracellular side of the membrane. The chain crosses the membrane as a helical span at residues 109–126 (WWVPPCCGTAAAVVGLLY). Over 127-141 (PCIDSHLGEPHKFKR) the chain is Cytoplasmic. Glycyl lysine isopeptide (Lys-Gly) (interchain with G-Cter in ubiquitin) cross-links involve residues Lys-138 and Lys-140. Residues 142 to 164 (EWASVMRCIAVFVGINHASAKLD) traverse the membrane as a helical segment. At 165–167 (FAN) the chain is on the extracellular side. Residues 168–186 (NVQLSLTLAALSLGLWWTF) traverse the membrane as a helical segment. Over 187–191 (DRSRS) the chain is Cytoplasmic. Ser-189 carries the post-translational modification Phosphoserine. The helical transmembrane segment at 192-213 (GLGLGITIAFLATLITQFLVYN) threads the bilayer. Residues 214–227 (GVYQYTSPDFLYIR) lie on the Extracellular side of the membrane. A helical membrane pass occupies residues 228-245 (SWLPCIFFSGGVTVGNIG). At 246 to 259 (RQLAMGVPEKPHSD) the chain is on the cytoplasmic side. A KxHxx motif is present at residues 253–259 (PEKPHSD).

The protein belongs to the INSIG family. As to quaternary structure, interacts with SCAP; interaction is direct and only takes place in the presence of sterols; it prevents interaction between SCAP and the coat protein complex II (COPII). Associates with the SCAP-SREBP complex (composed of SCAP and SREBF1/SREBP1 or SREBF2/SREBP2); association is mediated via its interaction with SCAP and only takes place in the presence of sterols. Interaction with SCAP is mutually exclusive with PAQR3. Interacts with HMGCR (via its SSD); the interaction, accelerated by sterols, leads to the recruitment of HMGCR to AMFR/gp78 for its ubiquitination by the sterol-mediated ERAD pathway. Interacts with AMFR/gp78 (via its membrane domain); the interaction recruits HMCR at the ER membrane for its ubiquitination and degradation by the sterol-mediated ERAD pathway. Interacts with SOAT2/ACAT2; leading to promote recruitment of AMFR/gp78 and subsequent ubiquitination of SOAT2/ACAT2. Interacts with RNF139. Interacts with RNF145. Post-translationally, phosphorylation at Ser-189 by PCK1 reduces binding to oxysterol, disrupting the interaction between INSIG1 and SCAP, thereby promoting nuclear translocation of SREBP proteins (SREBF1/SREBP1 or SREBF2/SREBP2) and subsequent transcription of downstream lipogenesis-related genes. Ubiquitinated by AMFR/gp78 in response to sterol deprivation, leading to its degradation: when the SCAP-SREBP complex becomes dissociated from INSIG1, INSIG1 is then ubiquitinated and degraded in proteasomes. Although ubiquitination is required for rapid INSIG1 degradation, it is not required for release of the SCAP-SREBP complex. Ubiquitinated by RNF139.

Its subcellular location is the endoplasmic reticulum membrane. In terms of biological role, oxysterol-binding protein that mediates feedback control of cholesterol synthesis by controlling both endoplasmic reticulum to Golgi transport of SCAP and degradation of HMGCR. Acts as a negative regulator of cholesterol biosynthesis by mediating the retention of the SCAP-SREBP complex in the endoplasmic reticulum, thereby blocking the processing of sterol regulatory element-binding proteins (SREBPs) SREBF1/SREBP1 and SREBF2/SREBP2. Binds oxysterol, including 25-hydroxycholesterol, regulating interaction with SCAP and retention of the SCAP-SREBP complex in the endoplasmic reticulum. In presence of oxysterol, interacts with SCAP, retaining the SCAP-SREBP complex in the endoplasmic reticulum, thereby preventing SCAP from escorting SREBF1/SREBP1 and SREBF2/SREBP2 to the Golgi. Sterol deprivation or phosphorylation by PCK1 reduce oxysterol-binding, disrupting the interaction between INSIG1 and SCAP, thereby promoting Golgi transport of the SCAP-SREBP complex, followed by processing and nuclear translocation of SREBF1/SREBP1 and SREBF2/SREBP2. Also regulates cholesterol synthesis by regulating degradation of HMGCR: initiates the sterol-mediated ubiquitin-mediated endoplasmic reticulum-associated degradation (ERAD) of HMGCR via recruitment of the reductase to the ubiquitin ligases AMFR/gp78 and/or RNF139. Also regulates degradation of SOAT2/ACAT2 when the lipid levels are low: initiates the ubiquitin-mediated degradation of SOAT2/ACAT2 via recruitment of the ubiquitin ligases AMFR/gp78. The protein is Insulin-induced gene 1 protein of Mus musculus (Mouse).